A 260-amino-acid polypeptide reads, in one-letter code: NH(3)-dependent NAD(+) synthetase (260 aa).

Residue 31-38 participates in ATP binding; the sequence is GLSGGLDS. Mg(2+) is bound at residue Asp-37. Residue Arg-112 coordinates deamido-NAD(+). Thr-132 contacts ATP. Glu-137 contributes to the Mg(2+) binding site. Residues Lys-161 and Ser-183 each coordinate ATP.

This sequence belongs to the NAD synthetase family. In terms of assembly, homodimer.

The enzyme catalyses deamido-NAD(+) + NH4(+) + ATP = AMP + diphosphate + NAD(+) + H(+). The protein operates within cofactor biosynthesis; NAD(+) biosynthesis; NAD(+) from deamido-NAD(+) (ammonia route): step 1/1. Functionally, catalyzes the ATP-dependent amidation of deamido-NAD to form NAD. Uses ammonia as a nitrogen source. This chain is NH(3)-dependent NAD(+) synthetase, found in Helicobacter pylori (strain HPAG1).